Reading from the N-terminus, the 1407-residue chain is DNA-directed RNA polymerase subunit beta' (1407 aa).

Zn(2+) contacts are provided by Cys70, Cys72, Cys85, and Cys88. 3 residues coordinate Mg(2+): Asp460, Asp462, and Asp464. Zn(2+) contacts are provided by Cys814, Cys888, Cys895, and Cys898.

The protein belongs to the RNA polymerase beta' chain family. The RNAP catalytic core consists of 2 alpha, 1 beta, 1 beta' and 1 omega subunit. When a sigma factor is associated with the core the holoenzyme is formed, which can initiate transcription. Mg(2+) is required as a cofactor. The cofactor is Zn(2+).

The catalysed reaction is RNA(n) + a ribonucleoside 5'-triphosphate = RNA(n+1) + diphosphate. DNA-dependent RNA polymerase catalyzes the transcription of DNA into RNA using the four ribonucleoside triphosphates as substrates. The polypeptide is DNA-directed RNA polymerase subunit beta' (Cronobacter sakazakii (strain ATCC BAA-894) (Enterobacter sakazakii)).